A 541-amino-acid polypeptide reads, in one-letter code: Catalase (541 aa).

A disordered region spans residues 1 to 20 (MPQTKGKPHEEQLEQYKNSQ). Catalysis depends on residues histidine 74 and asparagine 147. Residue tyrosine 357 coordinates heme.

The protein belongs to the catalase family. It depends on heme as a cofactor.

The protein resides in the peroxisome matrix. The catalysed reaction is 2 H2O2 = O2 + 2 H2O. Catalyzes the degradation of hydrogen peroxide (H(2)O(2)) generated by peroxisomal oxidases to water and oxygen, thereby protecting cells from the toxic effects of hydrogen peroxide. The polypeptide is Catalase (CAT) (Ascaris suum (Pig roundworm)).